Reading from the N-terminus, the 321-residue chain is Sex-lethal homolog (321 aa).

2 RRM domains span residues 78-156 (TNLI…FARP) and 164-244 (TNLY…VAEE).

In terms of tissue distribution, expressed in gonads and somatic tissues of both sexes. In the ovary, expressed in the last egg chamber of each ovariole. Highly expressed in nurse cells with low expression found in oocytes. Highly expressed in testis with lower expression in testis sheath and vas deferentia.

It localises to the nucleus. Unknown; apparently not involved in somatic sex determination. This Megaselia scalaris (Humpbacked fly) protein is Sex-lethal homolog (SXL).